A 421-amino-acid chain; its full sequence is 5-hydroxytryptamine receptor 1A (421 aa).

The Extracellular segment spans residues 1 to 38; it reads MDMFSLGQGNNTTTSLEPFGTGGNDTGLSNVTFSYQVI. Asn-10, Asn-11, Asn-24, and Asn-30 each carry an N-linked (GlcNAc...) asparagine glycan. Residues 39–59 form a helical membrane-spanning segment; the sequence is TSLLLGTLIFCAVLGNACVVA. The Cytoplasmic segment spans residues 60–73; that stretch reads AIALERSLQNVANY. The chain crosses the membrane as a helical span at residues 74-98; the sequence is LIGSLAVTDLMVSVLVLPMAALYQV. Over 99 to 107 the chain is Extracellular; it reads LNKWTLGQV. The helical transmembrane segment at 108 to 132 threads the bilayer; that stretch reads TCDLFIALDVLCCTSSILHLCAIAL. A disulfide bridge connects residues Cys-109 and Cys-187. Serotonin is bound by residues Asp-116 and Cys-120. Positions 133–135 match the DRY motif; important for ligand-induced conformation changes motif; it reads DRY. At 133–152 the chain is on the cytoplasmic side; the sequence is DRYWAITDPIDYVNKRTPRR. A helical transmembrane segment spans residues 153–174; that stretch reads AAALISLTWLIGFLISIPPMLG. Over 175 to 193 the chain is Extracellular; that stretch reads WRTPEDRSNPNECTISKDH. Residues 194 to 216 form a helical membrane-spanning segment; that stretch reads GYTIYSTFGAFYIPLLLMLVLYG. The Cytoplasmic portion of the chain corresponds to 217-346; it reads RIFRAARFRI…LARERKTVKT (130 aa). A disordered region spans residues 237-268; it reads GAGTSFGTSSAPPPKKSLNGQPGSGDCRRSAE. 1D-myo-inositol 4-phosphate-binding residues include Thr-314, Lys-345, Thr-346, and Gly-352. A helical membrane pass occupies residues 347 to 370; sequence LGIIMGTFILCWLPFFIVALVLPF. Over 371–378 the chain is Extracellular; the sequence is CESSCHMP. The helical transmembrane segment at 379–403 threads the bilayer; it reads ELLGAIINWLGYSNSLLNPVIYAYF. Positions 396-400 match the NPxxY motif; important for ligand-induced conformation changes and signaling motif; sequence NPVIY. Positions 403, 404, and 405 each coordinate 1D-myo-inositol 4-phosphate. The Cytoplasmic segment spans residues 404 to 421; the sequence is NKDFQNAFKKIIKCKFCR.

It belongs to the G-protein coupled receptor 1 family. 5-hydroxytryptamine receptor subfamily. HTR1A sub-subfamily. As to quaternary structure, heterodimer; heterodimerizes with GPER1. Interacts with YIF1B. Interacts with GPR39 and GALR1. Most abundantly expressed in midbrain, in dorsal raphe and hippocampus. Detected at lower levels in amygdala and brain cortex.

Its subcellular location is the cell membrane. The protein resides in the cell projection. It is found in the dendrite. Its activity is regulated as follows. G-protein coupled receptor activity is regulated by lipids: phosphatidylinositol 4-phosphate increases HTR1A-mediated activity. Plays a role in the regulation of dopamine and 5-hydroxytryptamine levels in the brain, and thereby affects neural activity, mood and behavior. Plays a role in the response to anxiogenic stimuli. G-protein coupled receptor for 5-hydroxytryptamine (serotonin). Also functions as a receptor for various drugs and psychoactive substances. Ligand binding causes a conformation change that triggers signaling via guanine nucleotide-binding proteins (G proteins) and modulates the activity of downstream effectors, such as adenylate cyclase. HTR1A is coupled to G(i)/G(o) G alpha proteins and mediates inhibitory neurotransmission: signaling inhibits adenylate cyclase activity and activates a phosphatidylinositol-calcium second messenger system that regulates the release of Ca(2+) ions from intracellular stores. Beta-arrestin family members regulate signaling by mediating both receptor desensitization and resensitization processes. This is 5-hydroxytryptamine receptor 1A (Htr1a) from Mus musculus (Mouse).